Consider the following 291-residue polypeptide: tRNA-cytidine(32) 2-sulfurtransferase (291 aa).

Residues 36-41 (SGGKDS) carry the PP-loop motif motif. [4Fe-4S] cluster is bound by residues Cys111, Cys114, and Cys202. A disordered region spans residues 259–291 (DPWLDAEDEEAEDCGEPSAGDGVVSLGGARGGR). The span at 262 to 273 (LDAEDEEAEDCG) shows a compositional bias: acidic residues.

The protein belongs to the TtcA family. In terms of assembly, homodimer. The cofactor is Mg(2+). [4Fe-4S] cluster is required as a cofactor.

The protein resides in the cytoplasm. The enzyme catalyses cytidine(32) in tRNA + S-sulfanyl-L-cysteinyl-[cysteine desulfurase] + AH2 + ATP = 2-thiocytidine(32) in tRNA + L-cysteinyl-[cysteine desulfurase] + A + AMP + diphosphate + H(+). It participates in tRNA modification. Its function is as follows. Catalyzes the ATP-dependent 2-thiolation of cytidine in position 32 of tRNA, to form 2-thiocytidine (s(2)C32). The sulfur atoms are provided by the cysteine/cysteine desulfurase (IscS) system. This Anaeromyxobacter sp. (strain K) protein is tRNA-cytidine(32) 2-sulfurtransferase.